The primary structure comprises 460 residues: ATP synthase subunit beta (460 aa).

150-157 is a binding site for ATP; that stretch reads GGAGVGKT.

The protein belongs to the ATPase alpha/beta chains family. In terms of assembly, F-type ATPases have 2 components, CF(1) - the catalytic core - and CF(0) - the membrane proton channel. CF(1) has five subunits: alpha(3), beta(3), gamma(1), delta(1), epsilon(1). CF(0) has three main subunits: a(1), b(2) and c(9-12). The alpha and beta chains form an alternating ring which encloses part of the gamma chain. CF(1) is attached to CF(0) by a central stalk formed by the gamma and epsilon chains, while a peripheral stalk is formed by the delta and b chains.

Its subcellular location is the cell inner membrane. The enzyme catalyses ATP + H2O + 4 H(+)(in) = ADP + phosphate + 5 H(+)(out). Produces ATP from ADP in the presence of a proton gradient across the membrane. The catalytic sites are hosted primarily by the beta subunits. In Yersinia pestis bv. Antiqua (strain Angola), this protein is ATP synthase subunit beta.